The sequence spans 139 residues: MLRKTNLSNITTLLRSARCMNRMPQLRFEHTKGDLKRVNRSYETRDAMLARLKYQSRKRGILETDLLLSNFAKDQIDKYPVSLLREYDQLLDEPDWDILYWCSGEREAPEKWKSSQVFKELSKYCRSQRNHTLRMPELF.

The N-terminal 28 residues, 1–28, are a transit peptide targeting the mitochondrion; sequence MLRKTNLSNITTLLRSARCMNRMPQLRF.

It belongs to the SDHAF2 family. In terms of assembly, interacts with the flavoprotein subunit within the SDH catalytic dimer.

The protein localises to the mitochondrion. It localises to the mitochondrion matrix. Functionally, plays an essential role in the assembly of succinate dehydrogenase (SDH), an enzyme complex (also referred to as respiratory complex II) that is a component of both the tricarboxylic acid (TCA) cycle and the mitochondrial electron transport chain, and which couples the oxidation of succinate to fumarate with the reduction of ubiquinone (coenzyme Q) to ubiquinol. Required for flavinylation (covalent attachment of FAD) of the flavoprotein subunit of the SDH catalytic dimer. The protein is Succinate dehydrogenase assembly factor 2, mitochondrial of Schizosaccharomyces pombe (strain 972 / ATCC 24843) (Fission yeast).